The primary structure comprises 740 residues: MMDWFMSTVYFYGPEINVSNRVVRNFSSDIENFLRISFVDEDCEKLRATDLSPRSASGHDANRTALYKRVLSVLSDGITIGGKNFEFLAFSSSQLRDNSAWMFASRQGLAASDIRTWMGDFRNIRNVAKYAARLGQSFSSSTETLKVQKYEVEEISDIKNGTQHVFSDGIGKISSAFANEVAMKCNLKRFAPSAFQIRYGGYKGVVAVDPTSRWKLSLRKSMLKFQSDNITVDVLAYSKYQPGFLNRQLITLLSTLGVRDSVFEQKQEEAVNQLNKMVTDPQAAIEAIELMPMGEITNAVKELLLCGYQPDDEPYLSMLLQTFRASKLLELKTKSRILIPKGRAMMGCLDETRTLKYGQVFIRATSGVNDNDRFTVTGKVVIAKNPCLHPGDIRILHAVDVPVLHHMFNCVVFPQQGPRPHPNECSGSDLDGDIYFVSWDPSLIPPRMVTPMDYTPAPTETLDHDVTIEEVEEYFTNYIVNESLGMIANAHVVFADKEDLKAESSPCIELAKLFSIAVDFPKTGVPALIPPELHVKEYPDFMEKLDKVTYESKGVIGKLYREIKKHTPHIKHFTREVARRSYDTDMIVDGYEDYITEAMALKDEYDFKLGNLMDHYGIKSEAEIISGCILKMAKNFTKKSDADAIRLAVRSLRKEARSRFSEMSLDDNGHGHDASEAKASAWYHVTYHPEFWGCYNEGYERPHFISFPWCIYEKLLRIKQRRKFVRKMQPELFSLHNLRI.

The protein belongs to the RdRP family.

It catalyses the reaction RNA(n) + a ribonucleoside 5'-triphosphate = RNA(n+1) + diphosphate. Probably involved in the RNA silencing pathway and required for the generation of small interfering RNAs (siRNAs). The protein is Probable RNA-dependent RNA polymerase 1 (RDR1) of Oryza sativa subsp. japonica (Rice).